The primary structure comprises 439 residues: Xylose isomerase (439 aa).

Residues histidine 101 and aspartate 104 contribute to the active site. Residues glutamate 232, glutamate 268, histidine 271, aspartate 296, aspartate 307, aspartate 309, and aspartate 339 each contribute to the Mg(2+) site.

The protein belongs to the xylose isomerase family. In terms of assembly, homotetramer. Requires Mg(2+) as cofactor.

It localises to the cytoplasm. The catalysed reaction is alpha-D-xylose = alpha-D-xylulofuranose. This chain is Xylose isomerase (xylA), found in Lactococcus lactis subsp. lactis (strain IL1403) (Streptococcus lactis).